Reading from the N-terminus, the 97-residue chain is Plastocyanin (97 aa).

Positions 1–97 constitute a Plastocyanin-like domain; sequence AEVKLGADDG…AGMKGEVTVT (97 aa). 4 residues coordinate Cu cation: H37, C82, H85, and M90.

It belongs to the plastocyanin family. The cofactor is Cu(2+).

Its subcellular location is the plastid. The protein resides in the chloroplast thylakoid membrane. Participates in electron transfer between P700 and the cytochrome b6-f complex in photosystem I. The polypeptide is Plastocyanin (PETE) (Daucus carota (Wild carrot)).